We begin with the raw amino-acid sequence, 306 residues long: tRNA dimethylallyltransferase 1 (306 aa).

15–22 (GPTGSGKS) contributes to the ATP binding site. Residue 17–22 (TGSGKS) participates in substrate binding. The interaction with substrate tRNA stretch occupies residues 40–43 (DSMQ).

The protein belongs to the IPP transferase family. As to quaternary structure, monomer. The cofactor is Mg(2+).

It catalyses the reaction adenosine(37) in tRNA + dimethylallyl diphosphate = N(6)-dimethylallyladenosine(37) in tRNA + diphosphate. Catalyzes the transfer of a dimethylallyl group onto the adenine at position 37 in tRNAs that read codons beginning with uridine, leading to the formation of N6-(dimethylallyl)adenosine (i(6)A). The polypeptide is tRNA dimethylallyltransferase 1 (Citrifermentans bemidjiense (strain ATCC BAA-1014 / DSM 16622 / JCM 12645 / Bem) (Geobacter bemidjiensis)).